Here is a 596-residue protein sequence, read N- to C-terminus: MAEPSGAETRPQIRVTVKTPKDKEEIVICDQASVKEFKEEISRRFKAQQDQLVLIFAGKILKDGDTLSQHGIKDGLTVHLVIKTPQKAQDPVTAAASPPSTPDSASAPSTTPASPAAAPVQPCSSGNTTSDAGSGGGPSPVAAEGPSSATASILSGFGGILGLGSLGLGSANFMELQQQMQRQLMSNPEMLSQIMENPLVQDMMSNPDLMRHMIMANPQMQQLMERNPEISHMLNNPELMRQTMELARNPAMMQEMMRNQDRALSNLESVPGGYNALRRMYTDIQEPMFTAAREQFGNNPFSSLAGNSDNSSSQPLRTENREPLPNPWSPSPPTSQAPGSGGEGTGGSGTSQVHPTVSNPFGINAASLGSGMFNSPEMQALLQQISENPQLMQNVISAPYMRTMMQTLAQNPDFAAQMMVNVPLFAGNPQLQEQLRLQLPVFLQQMQNPESLSILTNPRAMQALLQIQQGLQTLQTEAPGLVPSLGSFGTPRTSVPLAGSNSGSSAEAPTSSPGVPATSPPSAGSNAQQQLMQQMIQLLSGSGNSQVPMPEVRFQQQLEQLNSMGFINREANLQALIATGGDINAAIERLLGSQLS.

A Ubiquitin-like domain is found at 13-87 (IRVTVKTPKD…VHLVIKTPQK (75 aa)). Glycyl lysine isopeptide (Lys-Gly) (interchain with G-Cter in SUMO2) cross-links involve residues K23 and K62. Residues 89–148 (QDPVTAAASPPSTPDSASAPSTTPASPAAAPVQPCSSGNTTSDAGSGGGPSPVAAEGPSS) are disordered. Composition is skewed to low complexity over residues 93–119 (TAAA…AAAP) and 139–148 (SPVAAEGPSS). S139 is modified (phosphoserine). STI1 domains follow at residues 187–224 (NPEM…QQLM) and 225–256 (ERNP…MQEM). T282 is subject to Phosphothreonine. Residues 297–361 (GNNPFSSLAG…QVHPTVSNPF (65 aa)) are disordered. Positions 302–313 (SSLAGNSDNSSS) are enriched in low complexity. S313 is modified (phosphoserine). Residues 324 to 335 (LPNPWSPSPPTS) show a composition bias toward pro residues. Over residues 339-349 (GSGGEGTGGSG) the composition is skewed to gly residues. Positions 352 to 361 (QVHPTVSNPF) are enriched in polar residues. STI1 domains lie at 388-435 (NPQL…QEQL) and 439-471 (LPVF…QQGL). The segment at 482–528 (VPSLGSFGTPRTSVPLAGSNSGSSAEAPTSSPGVPATSPPSAGSNAQ) is disordered. Polar residues predominate over residues 499–513 (GSNSGSSAEAPTSSP). In terms of domain architecture, UBA spans 548–593 (PMPEVRFQQQLEQLNSMGFINREANLQALIATGGDINAAIERLLGS).

As to quaternary structure, homooligomer. Binds signal sequences of proteins that are targeted to the endoplasmic reticulum. Interacts (via UBA domain) with GJA1 (not ubiquitinated) and with ubiquitin; both compete for the same binding site. Interacts (via UBA domain) with ubiquitin and with polyubiquitin chains. Interacts (via ubiquitin-like domain) with PSMD2 and PSMD4, regulatory subunits of the 26S proteasome. Interacts with ATXN1/SCA1; interaction with ATXN1 inhibits polyubiquitination of UBQLN4 and interferes with PSMD4 binding. Interacts with HERPUD1. Interacts (via ubiquitin-like domain) with UBQLN1 (via UBA domain). Interacts with UBQLN2. Interacts (via STI1 1 and 2 domains) with MAP1LC3A/B/C. Interacts with BAG6. Interacts with MRE11 (when ubiquitinated); interaction with ubiquitinated MRE11 leads to MRE11 removal from chromatin. Interacts with DESI1/POST; leading to nuclear export. Interacts with BCL2A1 and BCL2L10. Post-translationally, phosphorylated by ATM at Ser-313 in response to DNA damage, leading to localization in the nucleus and recruitment to sites of DNA damage. Ubiquitinated; this does not lead to proteasomal degradation. May undergo both 'Lys-48'- and 'Lys-63'-linked polyubiquitination. Detected in testis, ovary, thyroid, kidney, thymus, heart, liver, lung and spleen (at protein level). Highly expressed in heart, skeletal muscle, kidney, liver and brain. Detected at lower levels in testis, lung and spleen.

It localises to the nucleus. The protein resides in the cytoplasm. It is found in the chromosome. Its subcellular location is the endoplasmic reticulum. The protein localises to the perinuclear region. It localises to the cytoplasmic vesicle. The protein resides in the autophagosome. In terms of biological role, regulator of protein degradation that mediates the proteasomal targeting of misfolded, mislocalized or accumulated proteins. Acts by binding polyubiquitin chains of target proteins via its UBA domain and by interacting with subunits of the proteasome via its ubiquitin-like domain. Key regulator of DNA repair that represses homologous recombination repair: in response to DNA damage, recruited to sites of DNA damage following phosphorylation by ATM and acts by binding and removing ubiquitinated MRE11 from damaged chromatin, leading to MRE11 degradation by the proteasome. MRE11 degradation prevents homologous recombination repair, redirecting double-strand break repair toward non-homologous end joining (NHEJ). Specifically recognizes and binds mislocalized transmembrane-containing proteins and targets them to proteasomal degradation. Collaborates with DESI1/POST in the export of ubiquitinated proteins from the nucleus to the cytoplasm. Plays a role in the regulation of the proteasomal degradation of non-ubiquitinated GJA1. Acts as an adapter protein that recruits UBQLN1 to the autophagy machinery. Mediates the association of UBQLN1 with autophagosomes and the autophagy-related protein LC3 (MAP1LC3A/B/C) and may assist in the maturation of autophagosomes to autolysosomes by mediating autophagosome-lysosome fusion. The protein is Ubiquilin-4 of Mus musculus (Mouse).